Reading from the N-terminus, the 603-residue chain is Threonine--tRNA ligase (603 aa).

Residues 209–500 (DHRKLGNEMK…LIEHCAGELP (292 aa)) are catalytic. Residues C301, H352, and H477 each contribute to the Zn(2+) site.

Belongs to the class-II aminoacyl-tRNA synthetase family. Homodimer. Zn(2+) is required as a cofactor.

The protein localises to the cytoplasm. The enzyme catalyses tRNA(Thr) + L-threonine + ATP = L-threonyl-tRNA(Thr) + AMP + diphosphate + H(+). Functionally, catalyzes the attachment of threonine to tRNA(Thr) in a two-step reaction: L-threonine is first activated by ATP to form Thr-AMP and then transferred to the acceptor end of tRNA(Thr). Also edits incorrectly charged L-seryl-tRNA(Thr). The sequence is that of Threonine--tRNA ligase from Campylobacter lari (strain RM2100 / D67 / ATCC BAA-1060).